A 319-amino-acid polypeptide reads, in one-letter code: tRNA dimethylallyltransferase (319 aa).

15-22 is an ATP binding site; sequence GPTASGKS. 17-22 contributes to the substrate binding site; the sequence is TASGKS. Interaction with substrate tRNA stretches follow at residues 40 to 43 and 164 to 168; these read DSRQ and QRLVR.

The protein belongs to the IPP transferase family. As to quaternary structure, monomer. Requires Mg(2+) as cofactor.

It carries out the reaction adenosine(37) in tRNA + dimethylallyl diphosphate = N(6)-dimethylallyladenosine(37) in tRNA + diphosphate. Catalyzes the transfer of a dimethylallyl group onto the adenine at position 37 in tRNAs that read codons beginning with uridine, leading to the formation of N6-(dimethylallyl)adenosine (i(6)A). The chain is tRNA dimethylallyltransferase from Chlorobium phaeobacteroides (strain DSM 266 / SMG 266 / 2430).